The primary structure comprises 804 residues: Probable exo-1,4-beta-xylosidase xlnD (804 aa).

The first 26 residues, 1–26, serve as a signal peptide directing secretion; it reads MAHSMSRPVAATAAALLALALPQALA. Residues Asn29, Asn124, Asn148, Asn242, and Asn251 are each glycosylated (N-linked (GlcNAc...) asparagine). Asp315 is a catalytic residue. Asn357, Asn390, Asn413, Asn444, Asn455, Asn573, Asn576, Asn665, Asn696, and Asn718 each carry an N-linked (GlcNAc...) asparagine glycan.

Belongs to the glycosyl hydrolase 3 family.

It is found in the secreted. The enzyme catalyses Hydrolysis of (1-&gt;4)-beta-D-xylans, to remove successive D-xylose residues from the non-reducing termini.. It functions in the pathway glycan degradation; xylan degradation. Its function is as follows. Xylan 1,4-beta-xylosidase involved in the hydrolysis of xylan, a major structural heterogeneous polysaccharide found in plant biomass representing the second most abundant polysaccharide in the biosphere, after cellulose. This is Probable exo-1,4-beta-xylosidase xlnD (xlnD) from Aspergillus niger (strain ATCC MYA-4892 / CBS 513.88 / FGSC A1513).